A 199-amino-acid polypeptide reads, in one-letter code: MSGHAGAVSDLVDQLSKLPGIGRKSAERLAFHLLRVHEDEALALASAIRRVRTDVRYCSVCYNLSETELCRICSDPKRDATRLCVVEQPRDLLSLDASGVYSGLYHVLLGRIAPLDGITPDQLTIDSLVERVRTGNFSEIIMATNPTVEGDGTSLYLSNLMQEFPVEITRLARGITSGSVLEYANREIIADALTGRQRL.

Residues 58–73 (CSVCYNLSETELCRIC) form a C4-type zinc finger. The Toprim domain maps to 81–176 (TRLCVVEQPR…EITRLARGIT (96 aa)).

It belongs to the RecR family.

In terms of biological role, may play a role in DNA repair. It seems to be involved in an RecBC-independent recombinational process of DNA repair. It may act with RecF and RecO. The protein is Recombination protein RecR of Rhodopirellula baltica (strain DSM 10527 / NCIMB 13988 / SH1).